A 211-amino-acid polypeptide reads, in one-letter code: MGQKSNPIGLRLKIINTWDSLWYANKDYTTKLHEDFLLRKFIKKAFYHASISKVVIARKVDVIMVNVYSAKPGVIIGKKGADIDKVKQKIVKMINNNIELNIIEVKKPELKAILIAENIAQQLERRVSFRRAMKRSVQNCLKIGAKGIKVSCAGRLGGAEIARTEWYKEGSVPLHTFRANIDYGFSEAKTIYGIIGVKVWVYLGETKSSNE.

In terms of domain architecture, KH type-2 spans 38-106 (LRKFIKKAFY…NIELNIIEVK (69 aa)).

The protein belongs to the universal ribosomal protein uS3 family. In terms of assembly, part of the 30S ribosomal subunit. Forms a tight complex with proteins S10 and S14.

In terms of biological role, binds the lower part of the 30S subunit head. Binds mRNA in the 70S ribosome, positioning it for translation. This chain is Small ribosomal subunit protein uS3, found in Ehrlichia ruminantium (strain Welgevonden).